Here is a 144-residue protein sequence, read N- to C-terminus: Large ribosomal subunit protein uL15 (144 aa).

The interval 1 to 53 (MRLNTLSPAEGAKHAPKRLGRGIGSGLGKTGGRGHKGQKSRSGGGVRRGFEGG) is disordered. A compositionally biased stretch (gly residues) spans 21 to 31 (RGIGSGLGKTG).

The protein belongs to the universal ribosomal protein uL15 family. In terms of assembly, part of the 50S ribosomal subunit.

In terms of biological role, binds to the 23S rRNA. This Pectobacterium carotovorum subsp. carotovorum (strain PC1) protein is Large ribosomal subunit protein uL15.